We begin with the raw amino-acid sequence, 379 residues long: Mannitol-1-phosphate 5-dehydrogenase (379 aa).

3 to 14 (ALHFGAGNIGRG) lines the NAD(+) pocket.

This sequence belongs to the mannitol dehydrogenase family.

The enzyme catalyses D-mannitol 1-phosphate + NAD(+) = beta-D-fructose 6-phosphate + NADH + H(+). This chain is Mannitol-1-phosphate 5-dehydrogenase, found in Bacillus licheniformis (strain ATCC 14580 / DSM 13 / JCM 2505 / CCUG 7422 / NBRC 12200 / NCIMB 9375 / NCTC 10341 / NRRL NRS-1264 / Gibson 46).